Here is an 898-residue protein sequence, read N- to C-terminus: Translation initiation factor IF-2 (898 aa).

A disordered region spans residues 51 to 302; sequence KEHGDATGSE…RKGRINKPMS (252 aa). 2 stretches are compositionally biased toward basic and acidic residues: residues 100–164 and 171–230; these read SSVE…KRET and RSDE…KETV. A compositionally biased stretch (polar residues) spans 234–245; sequence QENTDYHVTTSR. The segment covering 263 to 273 has biased composition (basic residues); it reads RRSTKANKRKM. The span at 274 to 286 shows a compositional bias: basic and acidic residues; the sequence is SSRDDNQERDSRP. Residues 287–297 are compositionally biased toward basic residues; sequence RGGKAGRKGRI. The region spanning 397 to 566 is the tr-type G domain; sequence SRAPVVTIMG…LLQAEVLELK (170 aa). The G1 stretch occupies residues 406–413; that stretch reads GHVDHGKT. 406 to 413 contributes to the GTP binding site; that stretch reads GHVDHGKT. Residues 431–435 form a G2 region; the sequence is GITQH. The G3 stretch occupies residues 452–455; sequence DTPG. GTP contacts are provided by residues 452-456 and 506-509; these read DTPGH and NKID. A G4 region spans residues 506–509; that stretch reads NKID. The segment at 542–544 is G5; sequence SAK.

Belongs to the TRAFAC class translation factor GTPase superfamily. Classic translation factor GTPase family. IF-2 subfamily.

The protein localises to the cytoplasm. In terms of biological role, one of the essential components for the initiation of protein synthesis. Protects formylmethionyl-tRNA from spontaneous hydrolysis and promotes its binding to the 30S ribosomal subunits. Also involved in the hydrolysis of GTP during the formation of the 70S ribosomal complex. This chain is Translation initiation factor IF-2, found in Vibrio cholerae serotype O1 (strain ATCC 39541 / Classical Ogawa 395 / O395).